Consider the following 853-residue polypeptide: Leucine-rich repeat and death domain-containing protein 1 (853 aa).

Residues 1 to 78 are disordered; that stretch reads MSEDGSNVEP…EEKNTGIPFS (78 aa). A compositionally biased stretch (acidic residues) spans 19-31; sequence LEEPGSEISDLLD. Residues 56–65 are compositionally biased toward polar residues; it reads QSAASFTSQL. LRR repeat units lie at residues 133 to 157, 159 to 180, 183 to 204, 206 to 227, 229 to 251, 252 to 274, 275 to 297, 298 to 319, 321 to 342, 344 to 365, 367 to 388, 390 to 411, 413 to 435, 436 to 457, 459 to 481, 482 to 503, 505 to 527, 528 to 549, 551 to 573, 574 to 596, 597 to 618, 620 to 641, 646 to 668, 669 to 690, 692 to 713, and 715 to 736; these read MKSD…IVKV, YVKY…DPGD, GLEI…IQLF, NLKI…LLQL, NMRQ…EHLR, YLET…SSLK, NLRI…CFLP, KLNS…VREL, NLES…IFQL, KIKE…IENF, ELRL…ISHC, NLES…IRKL, NLRQ…SHLS, NIHI…IKNC, KITR…CALQ, SLDY…MSFS, QLLH…CSLT, NLEY…ISAM, SLHV…CSLK, NLRV…SKLK, RIQK…LCQL, TLEE…PEEV, QLKI…GELR, SLVS…FLSL, VLQS…IYKL, and SLKE…ICKG. The region spanning 757–845 is the Death domain; it reads LEKIFNIVAN…DIMDKITALN (89 aa).

The polypeptide is Leucine-rich repeat and death domain-containing protein 1 (Lrrd1) (Mus musculus (Mouse)).